We begin with the raw amino-acid sequence, 308 residues long: MSNIVLSISTNIQKEVMAYYAANYIERKAAGVIFAAKLPDTSITMYKSGKLMFQGGGAEREAARWGTIEKTPNSKSAIIGAKGDTLPDQFALMSVLGSDETGTGDYFGPMTVAAVYVPSSKIELINELGVKDSKMLSDDYMRKIAPDLRAACVHSVLILRNEKYNSLQAKGYSQGKMKAMMHNKALHNTLAKMAPETPEYILIDQFAERGVYYNYLKNEREIVQESVYFSTKAEQLHVAVATASILARAAFLKEMDRLSDIAGLELMKGASNKVDVQAARIWRKQGEEFLRSITKWHFANTEKARKMI.

The region spanning 93-308 (MSVLGSDETG…ANTEKARKMI (216 aa)) is the RNase H type-2 domain. A divalent metal cation is bound by residues D99, E100, and D204.

This sequence belongs to the RNase HII family. RnhC subfamily. Requires Mn(2+) as cofactor. It depends on Mg(2+) as a cofactor.

It is found in the cytoplasm. The catalysed reaction is Endonucleolytic cleavage to 5'-phosphomonoester.. Functionally, endonuclease that specifically degrades the RNA of RNA-DNA hybrids. The polypeptide is Ribonuclease HIII (Lysinibacillus sphaericus (strain C3-41)).